A 110-amino-acid polypeptide reads, in one-letter code: MVVRSILLFVLAAVAEIGGAWLVWQGVREQRGWLWAGLGVIALGVYGFFATLQPDAHFGRVLAAYGGVFVAGSLAWGMALDGFRPDRWDVIGALGCMAGVAVIMYAPRGH.

A run of 4 helical transmembrane segments spans residues 6–26 (ILLFVLAAVAEIGGAWLVWQG), 32–52 (GWLWAGLGVIALGVYGFFATL), 61–81 (VLAAYGGVFVAGSLAWGMALD), and 90–110 (VIGALGCMAGVAVIMYAPRGH).

It belongs to the UPF0060 family.

It is found in the cell membrane. This Mycobacterium tuberculosis (strain CDC 1551 / Oshkosh) protein is UPF0060 membrane protein MT2717.